A 421-amino-acid polypeptide reads, in one-letter code: NADH-quinone oxidoreductase subunit F (421 aa).

54 to 63 provides a ligand contact to NAD(+); sequence GRGGAGFSTG. 166 to 213 is a binding site for FMN; the sequence is GAGAYICGEETALLESLEGKKGMPRLKPPFPAGFGLYGCPTTINNVES. [4Fe-4S] cluster is bound by residues cysteine 344, cysteine 347, cysteine 350, and cysteine 390.

Belongs to the complex I 51 kDa subunit family. The cofactor is FMN. Requires [4Fe-4S] cluster as cofactor.

The catalysed reaction is a quinone + NADH + 5 H(+)(in) = a quinol + NAD(+) + 4 H(+)(out). In terms of biological role, NDH-1 shuttles electrons from NADH, via FMN and iron-sulfur (Fe-S) centers, to quinones in the respiratory chain. Couples the redox reaction to proton translocation (for every two electrons transferred, four hydrogen ions are translocated across the cytoplasmic membrane), and thus conserves the redox energy in a proton gradient. This chain is NADH-quinone oxidoreductase subunit F (nuoF), found in Rickettsia conorii (strain ATCC VR-613 / Malish 7).